The following is a 316-amino-acid chain: MYEWLNALPKAELHLHLEGTLEPELLFALAERNRIALPWNDVETLRKAYAFNNLQEFLDLYYAGADVLRTEQDFYDLTWAYLQKCKAQNVVHVEPFFDPQTHTDRGIPFEVVLAGIRAALQDGEKLLGIRHGLILSFLRHLSEEQAQKTLDQALPFRDAFIAVGLDSSEVGHPPSKFQRVFDRARSEGFLTVAHAGEEGPPEYIWEALDLLKVERIDHGVRAFEDERLMRRLIDEQIPLTVCPLSNTKLCVFDDMSQHTILDMLERGVKVTVNSDDPAYFGGYVTENFHALQQSLGMTEEQARRLAQNSLDARLVK.

Positions 14, 16, and 194 each coordinate Zn(2+). Residue E197 is the Proton donor of the active site. Residue D275 coordinates Zn(2+). D276 contributes to the substrate binding site.

It belongs to the metallo-dependent hydrolases superfamily. Adenosine and AMP deaminases family. Adenine deaminase type 2 subfamily. Requires Zn(2+) as cofactor.

The catalysed reaction is adenine + H2O + H(+) = hypoxanthine + NH4(+). Functionally, catalyzes the hydrolytic deamination of adenine to hypoxanthine. Plays an important role in the purine salvage pathway and in nitrogen catabolism. The polypeptide is Adenine deaminase (Pseudomonas aeruginosa (strain UCBPP-PA14)).